The primary structure comprises 165 residues: Mid1-interacting protein 1-like (165 aa).

Residues 46–67 are disordered; that stretch reads DQESHASVSHNNNNNNEPSFPN.

This sequence belongs to the SPOT14 family.

The protein localises to the nucleus. It localises to the cytoplasm. The protein resides in the cytoskeleton. In terms of biological role, involved in stabilization of microtubules. May play a role in the regulation of lipogenesis. In Danio rerio (Zebrafish), this protein is Mid1-interacting protein 1-like.